The following is a 1021-amino-acid chain: Solute carrier family 12 member 3 (1021 aa).

Topologically, residues 1–137 (MAELPTTETP…KNPEEPVRFG (137 aa)) are cytoplasmic. The residue at position 43 (serine 43) is a Phosphoserine. At threonine 46 the chain carries Phosphothreonine; by OXSR1 and STK39. Serine 49 bears the Phosphoserine mark. At threonine 50 the chain carries Phosphothreonine. Threonine 55 and threonine 60 each carry phosphothreonine; by OXSR1 and STK39. Position 73 is a phosphoserine (serine 73). The residue at position 91 (serine 91) is a Phosphoserine; by OXSR1 and STK39. At threonine 124 the chain carries Phosphothreonine. Serine 126 carries the phosphoserine modification. The chain crosses the membrane as a discontinuously helical span at residues 138 to 167 (WVKGVMIRCMLNIWGVILYLRLPWITAQAG). Leucine 148 lines the Na(+) pocket. Asparagine 149 contacts polythiazide. Na(+) is bound at residue tryptophan 151. Residues 168-189 (IVLTWIIILLSVTVTSITGLSI) traverse the membrane as a helical segment. Over 190 to 220 (SAISTNGKVKSGGTYFLISRSLGPELGGSIG) the chain is Cytoplasmic. Residues 221 to 243 (LIFAFANAVGVAMHTVGFAETVR) form a helical membrane-spanning segment. Residues asparagine 227 and histidine 234 each contribute to the polythiazide site. Topologically, residues 244-255 (DLLQEYGAPIVD) are extracellular. Helical transmembrane passes span 256–280 (PIND…AGME) and 281–303 (WESK…YLVG). The Extracellular segment spans residues 304 to 338 (TLIPPSEDKASKGFFSYRADIFVQNLVPDWRGPDG). The chain crosses the membrane as a discontinuously helical span at residues 339 to 360 (TFFGMFSIFFPSATGILAGANI). A polythiazide-binding site is contributed by threonine 352. Residues glycine 353, isoleucine 354, and leucine 355 each contribute to the chloride site. Asparagine 359 serves as a coordination point for polythiazide. Over 361–371 (SGDLKDPAIAI) the chain is Cytoplasmic. A helical transmembrane segment spans residues 372 to 393 (PKGTLMAIFWTTISYLAISATI). At 394 to 453 (GSCVVRDASGVLNDTVTPGWGACEGLACSYGWNFTECTQQHSCHYGLINYYQTMSMVSGF) the chain is on the extracellular side. N-linked (GlcNAc...) asparagine glycosylation is present at asparagine 406. Cysteine 416 and cysteine 421 are oxidised to a cystine. An N-linked (GlcNAc...) asparagine glycan is attached at asparagine 426. Cysteine 430 and cysteine 436 are oxidised to a cystine. Residues 454-477 (APLITAGIFGATLSSALACLVSAA) form a helical membrane-spanning segment. Na(+)-binding residues include alanine 464, serine 467, and serine 468. Residues 478 to 507 (KVFQCLCEDQLYPLIGFFGKGYGKNKEPVR) are Cytoplasmic-facing. The helical transmembrane segment at 508–522 (GYLLAYAIAVAFIII) threads the bilayer. At 523–527 (AELNT) the chain is on the extracellular side. A helical transmembrane segment spans residues 528 to 544 (IAPIISNFFLCSYALIN). Tyrosine 540 provides a ligand contact to chloride. Topologically, residues 545–567 (FSCFHASITNSPGWRPSFQYYNK) are cytoplasmic. Transmembrane regions (helical) follow at residues 568–587 (WAAL…LTWW) and 588–599 (AALIAIGVVLFL). The Cytoplasmic segment spans residues 600 to 1021 (LLYVIYKKPE…QENVLTFYCQ (422 aa)). The tract at residues 615–630 (SVQAGSYNLALSYSVG) is scissor helix. Residues leucine 648, arginine 655, valine 677, glycine 741, leucine 780, and asparagine 781 each contribute to the ATP site.

Belongs to the SLC12A transporter family. Homodimer; adopts a domain-swap conformation at the scissor helices connecting the transmembrane domain and C-terminal domain. Interacts with KLHL3. Interacts with IL18R1; this interaction is increased by IL18 treatment. Post-translationally, ubiquitinated; ubiquitination is essential for regulation of endocytosis. The BCR(KLHL3) complex was initially identified as a candidate ubiquitin ligase for SLC12A3. However, it was later shown that it is not the case. Phosphorylated at Thr-46, Thr-55, Thr-60 and Ser-91 by OXSR1/OSR1 and STK39/SPAK downstream of WNK4, promoting its activity. Phosphorylated in response to IL18. As to expression, predominantly expressed in the kidney (at protein level). Localizes to the distal convoluted tubules (at protein level). Not detected in normal aorta, but abundantly expressed in fatty streaks and advanced atherosclerotic lesions (at protein level).

It localises to the cell membrane. The protein resides in the apical cell membrane. The catalysed reaction is chloride(out) + Na(+)(out) = chloride(in) + Na(+)(in). Phosphorylation by OXSR1/OSR1 and STK39/SPAK in kidney distal convoluted tubules downstream of WNK4 promotes its activity. Also activated by OXSR1/OSR1 and STK39/SPAK downstream of WNK3. Target of thiazide diuretics used in the treatment of high blood pressure. Thiazide drugs, such as polythiazide, specifically inhibit SLC12A3/NCC transporter activity by competing with chloride for binding and by locking SLC12A3/NCC in an outward-facing conformation. Functionally, electroneutral sodium and chloride ion cotransporter, which acts as a key mediator of sodium and chloride reabsorption in kidney distal convoluted tubules. Also acts as a receptor for the pro-inflammatory cytokine IL18, thereby contributing to IL18-induced cytokine production, including IFNG, IL6, IL18 and CCL2. May act either independently of IL18R1, or in a complex with IL18R1. This is Solute carrier family 12 member 3 from Homo sapiens (Human).